A 252-amino-acid chain; its full sequence is Aliphatic sulfonates import ATP-binding protein SsuB 1 (252 aa).

Residues 6–234 (LQLHIAGKRF…PRDRQAHEAA (229 aa)) form the ABC transporter domain. 38-45 (GASGCGKS) is a binding site for ATP.

The protein belongs to the ABC transporter superfamily. Aliphatic sulfonates importer (TC 3.A.1.17.2) family. The complex is composed of two ATP-binding proteins (SsuB), two transmembrane proteins (SsuC) and a solute-binding protein (SsuA).

It localises to the cell inner membrane. The catalysed reaction is ATP + H2O + aliphatic sulfonate-[sulfonate-binding protein]Side 1 = ADP + phosphate + aliphatic sulfonateSide 2 + [sulfonate-binding protein]Side 1.. In terms of biological role, part of the ABC transporter complex SsuABC involved in aliphatic sulfonates import. Responsible for energy coupling to the transport system. In Xanthomonas axonopodis pv. citri (strain 306), this protein is Aliphatic sulfonates import ATP-binding protein SsuB 1.